A 471-amino-acid polypeptide reads, in one-letter code: Argininosuccinate lyase (471 aa).

It belongs to the lyase 1 family. Argininosuccinate lyase subfamily.

The protein localises to the cytoplasm. It carries out the reaction 2-(N(omega)-L-arginino)succinate = fumarate + L-arginine. Its pathway is amino-acid biosynthesis; L-arginine biosynthesis; L-arginine from L-ornithine and carbamoyl phosphate: step 3/3. The sequence is that of Argininosuccinate lyase from Parasynechococcus marenigrum (strain WH8102).